We begin with the raw amino-acid sequence, 133 residues long: Profilin (133 aa).

Belongs to the profilin family.

Functionally, more likely to influence phosphoinositide metabolism than actin assembly. This chain is Profilin, found in Vaccinia virus (strain Tian Tan) (VACV).